We begin with the raw amino-acid sequence, 234 residues long: 2-C-methyl-D-erythritol 4-phosphate cytidylyltransferase (234 aa).

Belongs to the IspD/TarI cytidylyltransferase family. IspD subfamily.

It catalyses the reaction 2-C-methyl-D-erythritol 4-phosphate + CTP + H(+) = 4-CDP-2-C-methyl-D-erythritol + diphosphate. It functions in the pathway isoprenoid biosynthesis; isopentenyl diphosphate biosynthesis via DXP pathway; isopentenyl diphosphate from 1-deoxy-D-xylulose 5-phosphate: step 2/6. In terms of biological role, catalyzes the formation of 4-diphosphocytidyl-2-C-methyl-D-erythritol from CTP and 2-C-methyl-D-erythritol 4-phosphate (MEP). The polypeptide is 2-C-methyl-D-erythritol 4-phosphate cytidylyltransferase (Shewanella sediminis (strain HAW-EB3)).